The primary structure comprises 228 residues: Protein crossbronx homolog (228 aa).

Residues 14-168 (LQEYKILAEY…VEQCVEDSQR (155 aa)) form the UBC core domain.

The protein belongs to the ubiquitin-conjugating enzyme family. FTS subfamily.

This is Protein crossbronx homolog from Anopheles gambiae (African malaria mosquito).